Reading from the N-terminus, the 123-residue chain is Small ribosomal subunit protein uS12 (123 aa).

The tract at residues 1-28 is disordered; it reads MPTIQQLIRKPREPKRVRSKSQHLESCP. Position 89 is a 3-methylthioaspartic acid (Asp-89).

It belongs to the universal ribosomal protein uS12 family. As to quaternary structure, part of the 30S ribosomal subunit. Contacts proteins S8 and S17. May interact with IF1 in the 30S initiation complex.

Functionally, with S4 and S5 plays an important role in translational accuracy. In terms of biological role, interacts with and stabilizes bases of the 16S rRNA that are involved in tRNA selection in the A site and with the mRNA backbone. Located at the interface of the 30S and 50S subunits, it traverses the body of the 30S subunit contacting proteins on the other side and probably holding the rRNA structure together. The combined cluster of proteins S8, S12 and S17 appears to hold together the shoulder and platform of the 30S subunit. The chain is Small ribosomal subunit protein uS12 from Cereibacter sphaeroides (strain ATCC 17029 / ATH 2.4.9) (Rhodobacter sphaeroides).